Consider the following 295-residue polypeptide: 4-hydroxy-tetrahydrodipicolinate synthase (295 aa).

A pyruvate-binding site is contributed by Thr-46. Tyr-134 serves as the catalytic Proton donor/acceptor. Catalysis depends on Lys-162, which acts as the Schiff-base intermediate with substrate. Residue Val-204 participates in pyruvate binding.

It belongs to the DapA family. In terms of assembly, homotetramer; dimer of dimers.

The protein resides in the cytoplasm. The catalysed reaction is L-aspartate 4-semialdehyde + pyruvate = (2S,4S)-4-hydroxy-2,3,4,5-tetrahydrodipicolinate + H2O + H(+). It participates in amino-acid biosynthesis; L-lysine biosynthesis via DAP pathway; (S)-tetrahydrodipicolinate from L-aspartate: step 3/4. Its function is as follows. Catalyzes the condensation of (S)-aspartate-beta-semialdehyde [(S)-ASA] and pyruvate to 4-hydroxy-tetrahydrodipicolinate (HTPA). In Oceanobacillus iheyensis (strain DSM 14371 / CIP 107618 / JCM 11309 / KCTC 3954 / HTE831), this protein is 4-hydroxy-tetrahydrodipicolinate synthase.